A 64-amino-acid polypeptide reads, in one-letter code: Large ribosomal subunit protein bL35 (64 aa).

The protein belongs to the bacterial ribosomal protein bL35 family.

This is Large ribosomal subunit protein bL35 from Shewanella putrefaciens (strain CN-32 / ATCC BAA-453).